Reading from the N-terminus, the 671-residue chain is MESIEQQLIELRTTLRHHEYLYHVMDAPEIPDAEYDRLMRELRELETKHPELITPDSPTQRVGAAPLAAFSQIRHEVPMLSLDNVFDEESFLAFNKRVQDRLKSNEKVTWCCELKLDGLAVSILYENGVLVSAATRGDGTTGEDITSNVRTIRAIPLKLHGENIPARLEVRGEVFLPQAGFEKINEDARRTGGKVFANPRNAAAGSLRQLDPRITAKRPLTFFCYGVGVLEGGELPDTHLGRLMQFKAWGLPVSDRVTLCESAEEVLAFYHEVEKDRPTLGFDIDGVVIKVNSLAQQEQLGFVARAPRWAVAFKFPAQEQMTFVRDVEFQVGRTGAITPVARLEPVHVAGVLVSNATLHNADEIERLGLRIGDKVVIRRAGDVIPQVVNVVLSERPEDTREVVFPTHCPVCGSDVERVEGEAVARCTGGLICGAQRKESLKHFVSRRAMDVDGMGDKIIDQLVEKEYVHTPADLFKLTAVKLTGLERMGPKSAQNVVNALEKAKETTFARFLYALGIREVGEATAAGLAAYFGTLEALEAASIEELQKVPDVGIVVASHVHNFFAEESNRNVISELLAEGVHWPEPIVINAEEIDSPFAGKTVVLTGSLSQMSRDDAKARLVELGAKVAGSVSKKTDLVIAGEAAGSKLAKAQELGIEVIDETEMLRLLGS.

NAD(+) is bound by residues 32 to 36, 81 to 82, and glutamate 113; these read DAEYD and SL. Catalysis depends on lysine 115, which acts as the N6-AMP-lysine intermediate. The NAD(+) site is built by arginine 136, glutamate 173, lysine 290, and lysine 314. Cysteine 408, cysteine 411, cysteine 426, and cysteine 432 together coordinate Zn(2+). Residues 593–671 form the BRCT domain; that stretch reads EIDSPFAGKT…ETEMLRLLGS (79 aa).

The protein belongs to the NAD-dependent DNA ligase family. LigA subfamily. Requires Mg(2+) as cofactor. Mn(2+) is required as a cofactor.

It carries out the reaction NAD(+) + (deoxyribonucleotide)n-3'-hydroxyl + 5'-phospho-(deoxyribonucleotide)m = (deoxyribonucleotide)n+m + AMP + beta-nicotinamide D-nucleotide.. Functionally, DNA ligase that catalyzes the formation of phosphodiester linkages between 5'-phosphoryl and 3'-hydroxyl groups in double-stranded DNA using NAD as a coenzyme and as the energy source for the reaction. It is essential for DNA replication and repair of damaged DNA. This Escherichia coli O127:H6 (strain E2348/69 / EPEC) protein is DNA ligase.